A 213-amino-acid polypeptide reads, in one-letter code: Kynurenine formamidase (213 aa).

Position 18 (Trp18) interacts with substrate. His48, His52, and Asp54 together coordinate Zn(2+). His58 functions as the Proton donor/acceptor in the catalytic mechanism. The Zn(2+) site is built by His160 and Glu172.

This sequence belongs to the Cyclase 1 superfamily. KynB family. As to quaternary structure, homodimer. It depends on Zn(2+) as a cofactor.

It carries out the reaction N-formyl-L-kynurenine + H2O = L-kynurenine + formate + H(+). It participates in amino-acid degradation; L-tryptophan degradation via kynurenine pathway; L-kynurenine from L-tryptophan: step 2/2. Its function is as follows. Catalyzes the hydrolysis of N-formyl-L-kynurenine to L-kynurenine, the second step in the kynurenine pathway of tryptophan degradation. The chain is Kynurenine formamidase from Burkholderia ambifaria (strain ATCC BAA-244 / DSM 16087 / CCUG 44356 / LMG 19182 / AMMD) (Burkholderia cepacia (strain AMMD)).